The following is a 452-amino-acid chain: Bis(5'-adenosyl)-triphosphatase enpp4 (452 aa).

The first 19 residues, 1–19, serve as a signal peptide directing secretion; the sequence is MFGRVFIVAVLYCITICKG. Topologically, residues 20 to 407 are extracellular; that stretch reads EDPTNSSTPK…NQWCIQVSEA (388 aa). An N-linked (GlcNAc...) asparagine glycan is attached at Asn24. 2 residues coordinate Zn(2+): Asp36 and Thr72. Thr72 (AMP-threonine intermediate) is an active-site residue. Asn93 lines the substrate pocket. N-linked (GlcNAc...) asparagine glycosylation is present at Asn107. Tyr154 serves as a coordination point for substrate. Residues Asn155 and Asn175 are each glycosylated (N-linked (GlcNAc...) asparagine). Positions 189 and 193 each coordinate Zn(2+). Asp189 serves as a coordination point for substrate. Asn202 is a glycosylation site (N-linked (GlcNAc...) asparagine). Residues Asp237 and His238 each coordinate Zn(2+). Cysteines 254 and 287 form a disulfide. 2 N-linked (GlcNAc...) asparagine glycosylation sites follow: Asn259 and Asn327. Residue His336 coordinates Zn(2+). A glycan (N-linked (GlcNAc...) asparagine) is linked at Asn386. Cys394 and Cys401 are disulfide-bonded. A helical membrane pass occupies residues 408-428; it reads IGIVIGAIMVLTTLTCIIIML. At 429 to 452 the chain is on the cytoplasmic side; the sequence is KKKMPSARPFSRLQFQDDDDPLIG.

It belongs to the nucleotide pyrophosphatase/phosphodiesterase family. Zn(2+) is required as a cofactor.

It localises to the cell membrane. It carries out the reaction P(1),P(3)-bis(5'-adenosyl) triphosphate + H2O = AMP + ADP + 2 H(+). Its function is as follows. Hydrolyzes extracellular Ap3A into AMP and ADP, and Ap4A into AMP and ATP. Ap3A and Ap4A are diadenosine polyphosphates thought to induce proliferation of vascular smooth muscle cells. Acts as a procoagulant, mediating platelet aggregation at the site of nascent thrombus via release of ADP from Ap3A and activation of ADP receptors. The sequence is that of Bis(5'-adenosyl)-triphosphatase enpp4 (enpp4) from Xenopus laevis (African clawed frog).